We begin with the raw amino-acid sequence, 42 residues long: Photosystem I reaction center subunit IX (42 aa).

Residues 7-27 (YLSIAPVLATLWFGFLVGSLI) traverse the membrane as a helical segment.

Belongs to the PsaJ family.

It is found in the plastid membrane. Functionally, may help in the organization of the PsaE and PsaF subunits. The sequence is that of Photosystem I reaction center subunit IX from Aneura mirabilis (Parasitic liverwort).